Consider the following 190-residue polypeptide: Probable chemoreceptor glutamine deamidase CheD (190 aa).

This sequence belongs to the CheD family.

The catalysed reaction is L-glutaminyl-[protein] + H2O = L-glutamyl-[protein] + NH4(+). Probably deamidates glutamine residues to glutamate on methyl-accepting chemotaxis receptors (MCPs), playing an important role in chemotaxis. This chain is Probable chemoreceptor glutamine deamidase CheD, found in Acidiphilium cryptum (strain JF-5).